The primary structure comprises 179 residues: Large ribosomal subunit protein bL9 (179 aa).

The interval 155–179 is disordered; it reads KPEEAPVPVAEEPTAETEQAEVAAE. Residues 167-179 are compositionally biased toward acidic residues; that stretch reads PTAETEQAEVAAE.

Belongs to the bacterial ribosomal protein bL9 family.

Binds to the 23S rRNA. In Porphyromonas gingivalis (strain ATCC BAA-308 / W83), this protein is Large ribosomal subunit protein bL9.